The sequence spans 116 residues: Vesicle-associated membrane protein 2 (116 aa).

Residues 1-28 (MSATAATVPPAAPAGEGGPPAPPPNLTS) form a disordered region. At Ser-2 the chain carries N-acetylserine. Over 2-94 (SATAATVPPA…KRKYWWKNLK (93 aa)) the chain is Cytoplasmic. Residues 31–91 (RLQQTQAQVD…AKLKRKYWWK (61 aa)) enclose the v-SNARE coiled-coil homology domain. Residues 92–116 (NLKMMIILGVICAIILIIIIVYFST) form a required for interaction with SEPT8 region. Residues 95–114 (MMIILGVICAIILIIIIVYF) traverse the membrane as a helical; Anchor for type IV membrane protein segment. Residues 115–116 (ST) lie on the Vesicular side of the membrane.

The protein belongs to the synaptobrevin family. In terms of assembly, part of the SNARE core complex containing SNAP25, VAMP2 and STX1A; this complex constitutes the basic catalytic machinery of the complex neurotransmitter release apparatus. Recruited to the SNARE complex following binding of the SNARE complex component STX1A to STXBP1. This complex binds to CPLX1. Interacts with VAPA and VAPB. Interacts (via N-terminus) with KCNB1 (via N-terminus and C-terminus); stimulates the channel inactivation rate of KCNB1. Interacts with POPDC1 and STX4. Interacts with WDFY2, PRKCZ and PRKCI. Forms a complex with WDFY2 and PRKCZ. Interacts with SEPT8; the interaction inhibits interaction of VAMP2 with SYP. Interacts with SYP; the interaction is inhibited by interaction with SEPT8. Interacts with PICALM. Interacts with alpha-synuclein/SNCA. Interacts with STX3 isoform 3B. Phosphorylated by PRKCZ in vitro and this phosphorylation is increased in the presence of WDFY2. Post-translationally, (Microbial infection) Targeted and hydrolyzed by C.botulinum neurotoxin type B (BoNT/B, botB); 20 hours after treatment of spinal cord cells almost all the protein has been digested. BoNT/B hydrolyzes the 76-Gln-|-Phe-77 bond and inhibits neurotransmitter release. In terms of processing, (Microbial infection) Targeted and hydrolyzed by C.tetani toxin (tetX); 20 hours after treatment of spinal cord cells almost all the protein has been digested. Tetanus toxin hydrolyzes the 76-Gln-|-Phe-77 bond and inhibits neurotransmitter release. In terms of tissue distribution, expressed in the outer plexiform layer of the retina (at protein level).

The protein resides in the cytoplasmic vesicle. It is found in the secretory vesicle. Its subcellular location is the synaptic vesicle membrane. It localises to the cell membrane. Its function is as follows. Involved in the targeting and/or fusion of transport vesicles to their target membrane. Major SNARE protein of synaptic vesicles which mediates fusion of synaptic vesicles to release neurotransmitters. Essential for fast vesicular exocytosis and activity-dependent neurotransmitter release as well as fast endocytosis that mediates rapid reuse of synaptic vesicles. Modulates the gating characteristics of the delayed rectifier voltage-dependent potassium channel KCNB1. This Mus musculus (Mouse) protein is Vesicle-associated membrane protein 2 (Vamp2).